Consider the following 270-residue polypeptide: Acyl-[acyl-carrier-protein]--UDP-N-acetylglucosamine O-acyltransferase (270 aa).

The protein belongs to the transferase hexapeptide repeat family. LpxA subfamily. Homotrimer.

Its subcellular location is the cytoplasm. It catalyses the reaction a (3R)-hydroxyacyl-[ACP] + UDP-N-acetyl-alpha-D-glucosamine = a UDP-3-O-[(3R)-3-hydroxyacyl]-N-acetyl-alpha-D-glucosamine + holo-[ACP]. It participates in glycolipid biosynthesis; lipid IV(A) biosynthesis; lipid IV(A) from (3R)-3-hydroxytetradecanoyl-[acyl-carrier-protein] and UDP-N-acetyl-alpha-D-glucosamine: step 1/6. Involved in the biosynthesis of lipid A, a phosphorylated glycolipid that anchors the lipopolysaccharide to the outer membrane of the cell. The sequence is that of Acyl-[acyl-carrier-protein]--UDP-N-acetylglucosamine O-acyltransferase from Sinorhizobium medicae (strain WSM419) (Ensifer medicae).